A 163-amino-acid polypeptide reads, in one-letter code: Large ribosomal subunit protein uL15 (163 aa).

The protein belongs to the universal ribosomal protein uL15 family. As to quaternary structure, part of the 50S ribosomal subunit.

In terms of biological role, binds to the 23S rRNA. In Orientia tsutsugamushi (strain Ikeda) (Rickettsia tsutsugamushi), this protein is Large ribosomal subunit protein uL15.